Reading from the N-terminus, the 230-residue chain is Maleylacetoacetate isomerase (230 aa).

Residues 7–95 form the GST N-terminal domain; the sequence is LRVTLYTYFR…YLDEAFPDNP (89 aa). Residues 17 to 22, Gln46, Val60, 79 to 80, Gln123, and 127 to 129 each bind glutathione; these read SSCSAR, QS, and NLR. The region spanning 104 to 226 is the GST C-terminal domain; that stretch reads NPQQRALVRS…HWRTQQDTPT (123 aa).

This sequence belongs to the GST superfamily. Zeta family. The cofactor is glutathione.

The protein localises to the cytoplasm. The enzyme catalyses 4-maleylacetoacetate = 4-fumarylacetoacetate. Its pathway is amino-acid degradation; L-phenylalanine degradation; acetoacetate and fumarate from L-phenylalanine: step 5/6. The sequence is that of Maleylacetoacetate isomerase (maiA) from Emericella nidulans (strain FGSC A4 / ATCC 38163 / CBS 112.46 / NRRL 194 / M139) (Aspergillus nidulans).